The following is a 409-amino-acid chain: Putative lipoate-protein ligase A (409 aa).

Residues 146–330 (GPDNCRLVFY…RFQKTFKVDG (185 aa)) form the BPL/LPL catalytic domain. Residues Arg-188, 193 to 196 (GTVL), and Lys-249 contribute to the ATP site. (R)-lipoate is bound at residue Lys-249.

The protein belongs to the LplA family. As to quaternary structure, monomer.

It catalyses the reaction L-lysyl-[lipoyl-carrier protein] + (R)-lipoate + ATP = N(6)-[(R)-lipoyl]-L-lysyl-[lipoyl-carrier protein] + AMP + diphosphate + H(+). It participates in protein modification; protein lipoylation via exogenous pathway; protein N(6)-(lipoyl)lysine from lipoate: step 1/2. Its pathway is protein modification; protein lipoylation via exogenous pathway; protein N(6)-(lipoyl)lysine from lipoate: step 2/2. In terms of biological role, catalyzes both the ATP-dependent activation of exogenously supplied lipoate to lipoyl-AMP and the transfer of the activated lipoyl onto the lipoyl domains of lipoate-dependent enzymes. This is Putative lipoate-protein ligase A (AIM22) from Saccharomyces cerevisiae (strain YJM789) (Baker's yeast).